Reading from the N-terminus, the 307-residue chain is tRNA pseudouridine synthase B (307 aa).

The active-site Nucleophile is the aspartate 41.

The protein belongs to the pseudouridine synthase TruB family. Type 1 subfamily.

The catalysed reaction is uridine(55) in tRNA = pseudouridine(55) in tRNA. Responsible for synthesis of pseudouridine from uracil-55 in the psi GC loop of transfer RNAs. This chain is tRNA pseudouridine synthase B, found in Prochlorococcus marinus (strain MIT 9312).